Here is a 227-residue protein sequence, read N- to C-terminus: PKHD-type hydroxylase Mfla_2317 (227 aa).

A Fe2OG dioxygenase domain is found at 78–178 (KVFPPLFNRY…RVSSFFWMQS (101 aa)). Residues H96, D98, and H159 each coordinate Fe cation. R169 provides a ligand contact to 2-oxoglutarate.

Fe(2+) serves as cofactor. The cofactor is L-ascorbate.

The chain is PKHD-type hydroxylase Mfla_2317 from Methylobacillus flagellatus (strain ATCC 51484 / DSM 6875 / VKM B-1610 / KT).